The primary structure comprises 55 residues: ATP synthase F(0) complex subunit 8 (55 aa).

Residues 8–24 (PWFMIMLMTWFTYSLLI) form a helical membrane-spanning segment.

Belongs to the ATPase protein 8 family. In terms of assembly, component of the ATP synthase complex composed at least of ATP5F1A/subunit alpha, ATP5F1B/subunit beta, ATP5MC1/subunit c (homooctomer), MT-ATP6/subunit a, MT-ATP8/subunit 8, ATP5ME/subunit e, ATP5MF/subunit f, ATP5MG/subunit g, ATP5MK/subunit k, ATP5MJ/subunit j, ATP5F1C/subunit gamma, ATP5F1D/subunit delta, ATP5F1E/subunit epsilon, ATP5PF/subunit F6, ATP5PB/subunit b, ATP5PD/subunit d, ATP5PO/subunit OSCP. ATP synthase complex consists of a soluble F(1) head domain (subunits alpha(3) and beta(3)) - the catalytic core - and a membrane F(0) domain - the membrane proton channel (subunits c, a, 8, e, f, g, k and j). These two domains are linked by a central stalk (subunits gamma, delta, and epsilon) rotating inside the F1 region and a stationary peripheral stalk (subunits F6, b, d, and OSCP).

It is found in the mitochondrion membrane. Subunit 8, of the mitochondrial membrane ATP synthase complex (F(1)F(0) ATP synthase or Complex V) that produces ATP from ADP in the presence of a proton gradient across the membrane which is generated by electron transport complexes of the respiratory chain. ATP synthase complex consist of a soluble F(1) head domain - the catalytic core - and a membrane F(1) domain - the membrane proton channel. These two domains are linked by a central stalk rotating inside the F(1) region and a stationary peripheral stalk. During catalysis, ATP synthesis in the catalytic domain of F(1) is coupled via a rotary mechanism of the central stalk subunits to proton translocation. In vivo, can only synthesize ATP although its ATP hydrolase activity can be activated artificially in vitro. Part of the complex F(0) domain. The protein is ATP synthase F(0) complex subunit 8 of Coturnix japonica (Japanese quail).